Consider the following 1066-residue polypeptide: Probable sucrose-phosphate synthase 4 (1066 aa).

Disordered stretches follow at residues 132-166 and 688-714; these read YAAADMSEDLSEGEKGENINESSSTHDESTRGRMP and PRHPRWQKSDDATEVSEADSPGDSLRD. Basic and acidic residues predominate over residues 143–162; it reads EGEKGENINESSSTHDESTR.

This sequence belongs to the glycosyltransferase 1 family. As to quaternary structure, homodimer or homotetramer. As to expression, expressed in germinating seeds.

The catalysed reaction is beta-D-fructose 6-phosphate + UDP-alpha-D-glucose = sucrose 6(F)-phosphate + UDP + H(+). It functions in the pathway glycan biosynthesis; sucrose biosynthesis; sucrose from D-fructose 6-phosphate and UDP-alpha-D-glucose: step 1/2. With respect to regulation, activity is regulated by phosphorylation and moderated by concentration of metabolites and light. Its function is as follows. Plays a role in photosynthetic sucrose synthesis by catalyzing the rate-limiting step of sucrose biosynthesis from UDP-glucose and fructose- 6-phosphate. Involved in the regulation of carbon partitioning in the leaves of plants. May regulate the synthesis of sucrose and therefore play a major role as a limiting factor in the export of photoassimilates out of the leaf. Plays a role for sucrose availability that is essential for plant growth and fiber elongation. The polypeptide is Probable sucrose-phosphate synthase 4 (SPS4) (Oryza sativa subsp. japonica (Rice)).